The following is a 198-amino-acid chain: tRNA (pseudouridine(54)-N(1))-methyltransferase (198 aa).

S-adenosyl-L-methionine-binding positions include L130, G153, 176–181 (LSPLEL), and C186.

The protein belongs to the methyltransferase superfamily. TrmY family. In terms of assembly, homodimer.

The protein localises to the cytoplasm. The catalysed reaction is pseudouridine(54) in tRNA + S-adenosyl-L-methionine = N(1)-methylpseudouridine(54) in tRNA + S-adenosyl-L-homocysteine + H(+). Functionally, specifically catalyzes the N1-methylation of pseudouridine at position 54 (Psi54) in tRNAs. In Methanococcus maripaludis (strain C5 / ATCC BAA-1333), this protein is tRNA (pseudouridine(54)-N(1))-methyltransferase.